A 216-amino-acid polypeptide reads, in one-letter code: Large ribosomal subunit protein uL3 (216 aa).

Residue Q153 is modified to N5-methylglutamine.

It belongs to the universal ribosomal protein uL3 family. As to quaternary structure, part of the 50S ribosomal subunit. Forms a cluster with proteins L14 and L19. Methylated by PrmB.

Its function is as follows. One of the primary rRNA binding proteins, it binds directly near the 3'-end of the 23S rRNA, where it nucleates assembly of the 50S subunit. The sequence is that of Large ribosomal subunit protein uL3 from Burkholderia multivorans (strain ATCC 17616 / 249).